The primary structure comprises 130 residues: Small ribosomal subunit protein uS11c (130 aa).

The protein belongs to the universal ribosomal protein uS11 family. In terms of assembly, part of the 30S ribosomal subunit.

The protein resides in the plastid. Its subcellular location is the chloroplast. This Stigeoclonium helveticum (Green alga) protein is Small ribosomal subunit protein uS11c.